Here is a 256-residue protein sequence, read N- to C-terminus: uncharacterized protein (256 aa).

Transmembrane regions (helical) follow at residues phenylalanine 5–leucine 25, isoleucine 30–phenylalanine 50, valine 64–isoleucine 84, and valine 105–isoleucine 125. Positions glutamate 198–serine 256 are disordered. The span at leucine 203–lysine 215 shows a compositional bias: low complexity. Phosphoserine occurs at positions 210 and 211.

It is found in the endoplasmic reticulum membrane. The protein resides in the nucleus membrane. This is an uncharacterized protein from Schizosaccharomyces pombe (strain 972 / ATCC 24843) (Fission yeast).